The sequence spans 295 residues: Indole-3-glycerol phosphate synthase (295 aa).

The protein belongs to the TrpC family.

The catalysed reaction is 1-(2-carboxyphenylamino)-1-deoxy-D-ribulose 5-phosphate + H(+) = (1S,2R)-1-C-(indol-3-yl)glycerol 3-phosphate + CO2 + H2O. It functions in the pathway amino-acid biosynthesis; L-tryptophan biosynthesis; L-tryptophan from chorismate: step 4/5. The protein is Indole-3-glycerol phosphate synthase of Prochlorococcus marinus (strain NATL1A).